The following is a 151-amino-acid chain: Thymosin beta (151 aa).

Repeat copies occupy residues 24–29 (LKKVET), 62–67 (LHSTPV), 100–105 (LKKTET), and 134–139 (LHHVET). The segment at 24-139 (LKKVETTEKN…DKSALHHVET (116 aa)) is 4 X 6 AA repeat of L-[KH]-[KSH]-[VT]-[EP]-[TV].

Belongs to the thymosin beta family. Interacts (via repeats 1, 2 and 4) with G-actin in a 1:3 ratio. Interacts (via repeats 2 and 3) with F-actin. As to expression, at the comma stage, enriched in the developing nerve ring (at protein level). Ubiquitously expressed in larvae and adults with enrichment in the spermatheca, the intestinal tract and the posterior bulb of the pharynx (at protein level). Expressed in oocytes and in the gonad (at protein level).

It is found in the cytoplasm. The protein localises to the cell cortex. It localises to the cell junction. Its subcellular location is the cytoskeleton. Functionally, plays an important role in the organization of the cytoskeleton by regulating actin polymerization in two ways. Firstly, by binding to and sequestering actin monomers (G actin) inhibits actin polymerization. Secondly, by binding directly filamentous actin (F actin) promotes actin polymerization. Regulates the formation of cortical actin in oocytes conferring them enough rigidity to sustain the contractions during ovulation. In Caenorhabditis elegans, this protein is Thymosin beta.